Consider the following 259-residue polypeptide: Translation initiation factor IF-2, chloroplastic (259 aa).

The 89-residue stretch at 171 to 259 folds into the tr-type G domain; the sequence is LRAPIVAVLG…LLIIAADEGI (89 aa). 180–187 lines the GTP pocket; the sequence is GHVNHGKT.

It belongs to the TRAFAC class translation factor GTPase superfamily. Classic translation factor GTPase family. IF-2 subfamily.

Its subcellular location is the plastid. It is found in the chloroplast. Functionally, one of the essential components for the initiation of protein synthesis. Protects formylmethionyl-tRNA from spontaneous hydrolysis and promotes its binding to the 30S ribosomal subunits. Also involved in the hydrolysis of GTP during the formation of the 70S ribosomal complex. The protein is Translation initiation factor IF-2, chloroplastic (infB) of Galdieria sulphuraria (Red alga).